The chain runs to 510 residues: Protein fork head (510 aa).

Disordered regions lie at residues 1–62 (MQKL…SPLA) and 175–205 (AMPP…YRRS). Residues 20 to 39 (SGGGGPPSGGGGGGGGGGGG) show a composition bias toward gly residues. Positions 47-60 (NNPNPTSNGGSMSP) are enriched in low complexity. Phosphoserine occurs at positions 187 and 190. A DNA-binding region (fork-head) is located at residues 209–300 (AKPPYSYISL…GNMFENGCYL (92 aa)). The disordered stretch occupies residues 309-359 (EKKEAIRQLHKSPSHSSLEATSPGKKDHEDSHHMHHHHHSRLDHHQHHKEA). Residues Ser-320, Ser-322, and Ser-330 each carry the phosphoserine modification. The span at 341–356 (HMHHHHHSRLDHHQHH) shows a compositional bias: basic residues.

The protein localises to the nucleus. Its function is as follows. Fkh promotes terminal as opposed to segmental development. In the absence of fkh, this developmental switch does not occur. The nuclear localization of the fkh protein suggest that fkh regulates the transcription of other, subordinate, genes. This is Protein fork head (fkh) from Drosophila melanogaster (Fruit fly).